A 168-amino-acid polypeptide reads, in one-letter code: uncharacterized protein (168 aa).

Over residues 1–15 (MKEASDREEAPKMVE) the composition is skewed to basic and acidic residues. Positions 1 to 36 (MKEASDREEAPKMVEKNYSTGFRKAHGEKDQSVTKP) are disordered.

The protein localises to the cytoplasm. This is an uncharacterized protein from Saccharomyces cerevisiae (strain ATCC 204508 / S288c) (Baker's yeast).